Consider the following 541-residue polypeptide: MAKAVTSSKGAEKSEKKKPAARSGVKKDASKSKDASKSQVNVKISSAPARSAAKDTPVKKEERAKGTVGEIKQVIGAVVDVQFEGALPNILNALETENLGNRLVLEVAQHLGENTVRTIAMDTTDGLMRGQKVVDTGAQISVPVGEATLGRIMNVIGEPVDNVGPIASTKTRSIHQEAPEYVEQSTVSEILVTGIKVVDLLAPYSKGGKIGLFGGAGVGKTVLIMELINNIAKAHGGYSVFAGVGERTREGNDLYYEMIESGVNVNPKENNGSTEGSKCALVYGQMNEPPGARARVALSGLTIAESFRDEGQDVLFFVDNIFRFTQAGAEVSALLGRIPSAVGYQPTLATDMGALQERITSTKIGSITSVQAIYVPADDLTDPAPATSFAHLDATTVLSRSIAEKGIYPAVDPLDSFSRMLDPLIVGEEHYTVACQVQTILQRYRALQDIIAILGMDELSEDDKLLVGRARKIERFLSQPFHVAEAFTGSPGKLVSLEDTIKGFKGLCAGDYDDLPEAAFYMVGSIDEALEKGKRLMAEAS.

The interval M1–K65 is disordered. Composition is skewed to basic and acidic residues over residues V25 to S36 and A52 to K65. G214–T221 lines the ATP pocket.

It belongs to the ATPase alpha/beta chains family. In terms of assembly, F-type ATPases have 2 components, CF(1) - the catalytic core - and CF(0) - the membrane proton channel. CF(1) has five subunits: alpha(3), beta(3), gamma(1), delta(1), epsilon(1). CF(0) has three main subunits: a(1), b(2) and c(9-12). The alpha and beta chains form an alternating ring which encloses part of the gamma chain. CF(1) is attached to CF(0) by a central stalk formed by the gamma and epsilon chains, while a peripheral stalk is formed by the delta and b chains.

It localises to the cell inner membrane. It carries out the reaction ATP + H2O + 4 H(+)(in) = ADP + phosphate + 5 H(+)(out). Its function is as follows. Produces ATP from ADP in the presence of a proton gradient across the membrane. The catalytic sites are hosted primarily by the beta subunits. In Bartonella tribocorum (strain CIP 105476 / IBS 506), this protein is ATP synthase subunit beta.